An 887-amino-acid polypeptide reads, in one-letter code: 3-hydroxy-3-methylglutaryl-coenzyme A reductase (887 aa).

The Cytoplasmic segment spans residues 1–9 (MLSRLFRMH). The helical transmembrane segment at 10–39 (GLFVASHPWEVIVGTVTLTICMMSMNMFTG) threads the bilayer. Over 40–56 (NNKICGWNYECPKFEED) the chain is Lumenal. Residues 57 to 78 (VLSSDIIILTITRCIAILYIYF) form a helical membrane-spanning segment. Residues 61–218 (DIIILTITRC…MTFFPACVSL (158 aa)) form the SSD domain. The INSIG-binding motif motif lies at 75 to 78 (YIYF). The Cytoplasmic segment spans residues 79–89 (QFQNLRQLGSK). Lys89 participates in a covalent cross-link: Glycyl lysine isopeptide (Lys-Gly) (interchain with G-Cter in ubiquitin). Residues 90-114 (YILGIAGLFTIFSSFVFSTVVIHFL) form a helical membrane-spanning segment. The Lumenal portion of the chain corresponds to 115–123 (DKELTGLNE). Residues 124–149 (ALPFFLLLIDLSRASALAKFALSSNS) form a helical membrane-spanning segment. Topologically, residues 150-159 (QDEVRENIAR) are cytoplasmic. Residues 160 to 187 (GMAILGPTFTLDALVECLVIGVGTMSGV) traverse the membrane as a helical segment. Over 188–191 (RQLE) the chain is Lumenal. The helical transmembrane segment at 192 to 220 (IMCCFGCMSVLANYFVFMTFFPACVSLVL) threads the bilayer. Topologically, residues 221–248 (ELSRESREGRPIWQLSHFARVLEEEENK) are cytoplasmic. Lys248 is covalently cross-linked (Glycyl lysine isopeptide (Lys-Gly) (interchain with G-Cter in ubiquitin)). The helical transmembrane segment at 249–275 (PNPVTQRVKMIMSLGLVLVHAHSRWIA) threads the bilayer. Over 276-314 (DPSPQNSTTEHSKVSLGLDEDVSKRIEPSVSLWQFYLSK) the chain is Lumenal. N-linked (GlcNAc...) asparagine glycosylation occurs at Asn281. The helical transmembrane segment at 315–339 (MISMDIEQVVTLSLAFLLAVKYIFF) threads the bilayer. Topologically, residues 340–887 (EQAETESTLS…LQGTCTKKSA (548 aa)) are cytoplasmic. Catalysis depends on charge relay system residues Glu558, Lys690, and Asp766. The active-site Proton donor is the His865. Position 871 is a phosphoserine; by AMPK (Ser871).

Belongs to the HMG-CoA reductase family. As to quaternary structure, homotetramer. Homodimer. Interacts (via its SSD) with INSIG1; the interaction, accelerated by sterols, leads to the recruitment of HMGCR to AMFR/gp78 for its ubiquitination by the sterol-mediated ERAD pathway. Interacts with UBIAD1. In terms of processing, N-glycosylated. Glycosylated with high mannose chains including Man(6)(GlcNAc)(2), Man(7)(GlcNAc)(2) and Man(8)(GlcNAc)(2). Deglycosylated by NGLY1 on release from the endoplasmic reticulum (ER) in a sterol-mediated manner. Undergoes sterol-mediated ubiquitination and ER-associated degradation (ERAD). Accumulation of sterols in the endoplasmic reticulum (ER) membrane, triggers binding of the reductase to the ER membrane protein INSIG1 or INSIG2. The INSIG1 binding leads to the recruitment of the ubiquitin ligase, AMFR/gp78, RNF139 or RNF145, initiating ubiquitination of the reductase. The ubiquitinated reductase is then extracted from the ER membrane and delivered to cytosolic 26S proteosomes by a mechanism probably mediated by the ATPase Valosin-containing protein VCP/p97. The INSIG2-binding leads to the recruitment of the ubiquitin ligase RNF139, initiating ubiquitination of the reductase. Lys-248 is the main site of ubiquitination. Ubiquitination is enhanced by the presence of a geranylgeranylated protein. Post-translationally, phosphorylated. Phosphorylation at Ser-871 reduces the catalytic activity.

Its subcellular location is the endoplasmic reticulum membrane. The protein localises to the peroxisome membrane. The catalysed reaction is (R)-mevalonate + 2 NADP(+) + CoA = (3S)-3-hydroxy-3-methylglutaryl-CoA + 2 NADPH + 2 H(+). It functions in the pathway metabolic intermediate biosynthesis; (R)-mevalonate biosynthesis; (R)-mevalonate from acetyl-CoA: step 3/3. Its activity is regulated as follows. Regulated by a negative feedback mechanism through sterols and non-sterol metabolites derived from mevalonate. Phosphorylation at Ser-871 down-regulates the catalytic activity. Its function is as follows. Catalyzes the conversion of (3S)-hydroxy-3-methylglutaryl-CoA (HMG-CoA) to mevalonic acid, the rate-limiting step in the synthesis of cholesterol and other isoprenoids, thus plays a critical role in cellular cholesterol homeostasis. The sequence is that of 3-hydroxy-3-methylglutaryl-coenzyme A reductase (HMGCR) from Cricetulus griseus (Chinese hamster).